Reading from the N-terminus, the 250-residue chain is MAELVIALDYPTMDAALATARALRGATDTAGDAGGRLWMKVGLELFTASGPEVVARLKDMGFPVFLDLKFHDIPNTVRGAVRSAVATGADMCNIHLPGGERMCRAAVEGLAEGAAARGHGAAPILLGVTVLTSVAPGELPGGADPSAEAARLAVCGREWGLGGVVCSGYEAAGIKQRCGRDFICLTPGIRPAAPQRSGSGDDDQRRVMTPAEAVRAGSDYLVVGRPVTGAAGPDGPAEAARRILAEMRGA.

Substrate is bound by residues aspartate 9, lysine 40, 67-76, threonine 132, arginine 190, glutamine 204, glycine 224, and arginine 225; that span reads DLKFHDIPNT. Lysine 69 (proton donor) is an active-site residue.

This sequence belongs to the OMP decarboxylase family. Type 1 subfamily. As to quaternary structure, homodimer.

The enzyme catalyses orotidine 5'-phosphate + H(+) = UMP + CO2. It functions in the pathway pyrimidine metabolism; UMP biosynthesis via de novo pathway; UMP from orotate: step 2/2. In terms of biological role, catalyzes the decarboxylation of orotidine 5'-monophosphate (OMP) to uridine 5'-monophosphate (UMP). The polypeptide is Orotidine 5'-phosphate decarboxylase (Nitratidesulfovibrio vulgaris (strain DSM 19637 / Miyazaki F) (Desulfovibrio vulgaris)).